We begin with the raw amino-acid sequence, 122 residues long: Putative ankyrin repeat protein L22 (122 aa).

ANK repeat units lie at residues D3–A32, D33–V62, N63–A92, and D94–Q122.

In Acanthamoeba polyphaga (Amoeba), this protein is Putative ankyrin repeat protein L22.